Reading from the N-terminus, the 174-residue chain is Large ribosomal subunit protein uL10 (174 aa).

This sequence belongs to the universal ribosomal protein uL10 family. In terms of assembly, part of the ribosomal stalk of the 50S ribosomal subunit. The N-terminus interacts with L11 and the large rRNA to form the base of the stalk. The C-terminus forms an elongated spine to which L12 dimers bind in a sequential fashion forming a multimeric L10(L12)X complex.

Functionally, forms part of the ribosomal stalk, playing a central role in the interaction of the ribosome with GTP-bound translation factors. This chain is Large ribosomal subunit protein uL10, found in Bordetella petrii (strain ATCC BAA-461 / DSM 12804 / CCUG 43448).